A 1206-amino-acid polypeptide reads, in one-letter code: MSFFNFRKIFKLGSEKKKKQYEHVKRDLNPEEFWEIIGELGDGAFGKVYKAQNKETNVLAAAKVIDTKSEEELEDYMVEIDILASCDHPNIVKLLDAFYYENNLWILIEFCAGGAVDAVMLELERPLTESQIQVVCKQTLEALNYLHDNKIIHRDLKAGNILFTLDGDIKLADFGVSAKNTRTIQRRDSFIGTPYWMAPEVVMCETSKDRPYDYKADVWSLGITLIEMAEIEPPHHELNPMRVLLKIAKSEPPTLAQPSRWSSNFKDFLKKCLEKNVDARWTTSQLLQHPFVTVDSNKPVRELIAEAKAEVTEEVEDGKEEDDDDETESALPIPANKRASSDLSIASSEEDKLSQNACILESVSERTEHNTSGDKFSNKVLSEKPTPEGPEKTVDVDGPANDVNLETVAEPNDQAVGFHENGREKKRPQLESQPDTEDQQTVDVNLVGEGNDSNIVILETNTDCLKPEEDRNEENQEIIENKLTQSEEIKDIHIQTMDLVSQETGEKEADFQAIDNEVGFTKEETQEKLGKDDKTHKVVISDITSEVGTDEPPGDTQKSAEQSQDAEGGAGEEAPEPAQTLTEKATEGPEAHGAEEEPRSGERVEDKQLEQQSAVCEGEGQVTSTSESTRATTEEPETDEVDQVSESNSIEELERLGVTGAEEQALGSKGEAATELDLEREENAQELPVKAEPQAPAASQASEPPPVLIPSINIHSENTENKGEMGALPKPETILPPEPENGKGNDTDSGTGSTVENSSSDLNLSISSFLSKTKDSGSVSLQETRRQKKTLKKTRKFIVDGVEVSVTTSKIVTDSDSKTEELRFLRRQELRELRLLQKEEQKAQQQLNGKLQQQREQIFRRFEQEMLSKKRQYDQEIENLEKQQKQTIERLEQEHTNRLRDEAKRIKGEQEKELSKFQNMLRNRKKEEQEFVQKQQQELDGALKKIIQQQKAELANIERECLNNKQQLLRAREAAIWELEERHLQEKHQLLKQQLKDQYFIQRHQLLKRHEKETEQMQRYNQRLIEELKNRQTQERARLPKIQRSEAKTRMAMFKKSLRINSTATPDQDREKIKQFAAQEEKRQKNERMAQHQKHESQMRDLQLQCEANVRELHQLQNEKCHLLVEHETQKLKELDEEHSQELKEWREKLRPRKKTLEEEFARKLQEQEVFFKMTGESECLNPSAQSRGCLQTSHPSSTRAPAWAG.

The residue at position 14 (S14) is a Phosphoserine. The 259-residue stretch at 34-292 (WEIIGELGDG…TSQLLQHPFV (259 aa)) folds into the Protein kinase domain. ATP-binding positions include 40–48 (LGDGAFGKV) and K63. The active-site Proton acceptor is D155. T183 is modified (phosphothreonine). S189 carries the phosphoserine modification. The disordered stretch occupies residues 308 to 352 (KAEVTEEVEDGKEEDDDDETESALPIPANKRASSDLSIASSEEDK). Residues 312-328 (TEEVEDGKEEDDDDETE) are compositionally biased toward acidic residues. Residues S340, S341, S344, S347, S348, S354, and S372 each carry the phosphoserine modification. Positions 364-440 (SERTEHNTSG…ESQPDTEDQQ (77 aa)) are disordered. Basic and acidic residues-rich tracts occupy residues 381–395 (LSEK…KTVD) and 420–429 (ENGREKKRPQ). A coiled-coil region spans residues 468 to 492 (EEDRNEENQEIIENKLTQSEEIKDI). Disordered stretches follow at residues 515 to 761 (DNEV…SSSD) and 773 to 792 (TKDS…KTLK). Residues 520–536 (FTKEETQEKLGKDDKTH) show a composition bias toward basic and acidic residues. Residues S545 and S563 each carry the phosphoserine modification. Positions 556–565 (TQKSAEQSQD) are enriched in polar residues. The span at 584-609 (KATEGPEAHGAEEEPRSGERVEDKQL) shows a compositional bias: basic and acidic residues. The span at 634 to 643 (EEPETDEVDQ) shows a compositional bias: acidic residues. Residues S645, S649, and S668 each carry the phosphoserine modification. Over residues 691–702 (AEPQAPAASQAS) the composition is skewed to low complexity. A compositionally biased stretch (polar residues) spans 747–757 (TDSGTGSTVEN). A phosphoserine mark is found at S776 and S778. At T813 the chain carries Phosphothreonine. S817 bears the Phosphoserine mark. Positions 825–1037 (LRRQELRELR…LKNRQTQERA (213 aa)) form a coiled coil. The UVR domain maps to 874–909 (DQEIENLEKQQKQTIERLEQEHTNRLRDEAKRIKGE). T1065 carries the phosphothreonine modification. Residues 1077 to 1151 (AAQEEKRQKN…ELKEWREKLR (75 aa)) are a coiled coil. The span at 1079–1099 (QEEKRQKNERMAQHQKHESQM) shows a compositional bias: basic and acidic residues. Disordered stretches follow at residues 1079 to 1100 (QEEK…SQMR) and 1181 to 1206 (LNPS…AWAG). Residues 1181–1200 (LNPSAQSRGCLQTSHPSSTR) show a composition bias toward polar residues.

It belongs to the protein kinase superfamily. STE Ser/Thr protein kinase family. STE20 subfamily. In terms of processing, proteolytically cleaved by caspase-3. Post-translationally, autophosphorylated.

The protein resides in the cytoplasm. The catalysed reaction is L-seryl-[protein] + ATP = O-phospho-L-seryl-[protein] + ADP + H(+). It carries out the reaction L-threonyl-[protein] + ATP = O-phospho-L-threonyl-[protein] + ADP + H(+). Functionally, mediates apoptosis and actin stress fiber dissolution. The chain is STE20-like serine/threonine-protein kinase (Slk) from Rattus norvegicus (Rat).